The chain runs to 449 residues: MKSSVEKLSDTRSKITVEVPFSELKPEIDQAYAALAQQVQIPGFRKGKAPRQLIDARFGRGAVLEQVVNDMLPNRYAQAIEAEGIKAIGQPNVEVTKIEDNELVEFVAEVDVRPEFELPKFEDITVEVPAIKADEEAIEAELETLRARFSTLKDHNHKLKKGEFVTINITASIDGEKIEEATTEGLSYEIGSDDLIDGLDKALIGAKKDETVEFTSELANGEHKGKEAQISVEITATKQRELPELDDEFAQLASEFDTIEELRESTVSDVEAKQKNEQAAAIRDEVLAAALGEADFALPQSIVDEQAHSQLHQLLGELAHDDAALNSLLEAQGTTREEFDKKNVEDAEKAVRTQLFLDTLSEVEEPEVSQQELTDHILFTAQSYGMDPNQFIGQLQQSGQIANLFSDVRRGKALAQAICRVNVKDSEGNEIDPKEYFGEEEVAETESEA.

The 82-residue stretch at 162-243 folds into the PPIase FKBP-type domain; that stretch reads GEFVTINITA…ITATKQRELP (82 aa). Residues 428 to 437 are compositionally biased toward basic and acidic residues; the sequence is GNEIDPKEYF. The interval 428-449 is disordered; it reads GNEIDPKEYFGEEEVAETESEA. Residues 438-449 show a composition bias toward acidic residues; that stretch reads GEEEVAETESEA.

The protein belongs to the FKBP-type PPIase family. Tig subfamily.

Its subcellular location is the cytoplasm. The enzyme catalyses [protein]-peptidylproline (omega=180) = [protein]-peptidylproline (omega=0). Involved in protein export. Acts as a chaperone by maintaining the newly synthesized protein in an open conformation. Functions as a peptidyl-prolyl cis-trans isomerase. The polypeptide is Trigger factor (Corynebacterium glutamicum (strain R)).